Consider the following 75-residue polypeptide: Cytochrome c oxidase subunit 6C (75 aa).

The Mitochondrial matrix portion of the chain corresponds to 1–13 (MAPEVLPKPQMRG). The helical transmembrane segment at 14 to 54 (LLAKRLRFHMVTAFVLSLGVAALYKFRVADKRKKAYADFYR) threads the bilayer. Residues 55–75 (NYDAMKDFEEMRKAGIFQSVK) lie on the Mitochondrial intermembrane side of the membrane.

This sequence belongs to the cytochrome c oxidase subunit 6c family. Component of the cytochrome c oxidase (complex IV, CIV), a multisubunit enzyme composed of 14 subunits. The complex is composed of a catalytic core of 3 subunits MT-CO1, MT-CO2 and MT-CO3, encoded in the mitochondrial DNA, and 11 supernumerary subunits COX4I, COX5A, COX5B, COX6A, COX6B, COX6C, COX7A, COX7B, COX7C, COX8 and NDUFA4, which are encoded in the nuclear genome. The complex exists as a monomer or a dimer and forms supercomplexes (SCs) in the inner mitochondrial membrane with NADH-ubiquinone oxidoreductase (complex I, CI) and ubiquinol-cytochrome c oxidoreductase (cytochrome b-c1 complex, complex III, CIII), resulting in different assemblies (supercomplex SCI(1)III(2)IV(1) and megacomplex MCI(2)III(2)IV(2)).

It localises to the mitochondrion inner membrane. It functions in the pathway energy metabolism; oxidative phosphorylation. Component of the cytochrome c oxidase, the last enzyme in the mitochondrial electron transport chain which drives oxidative phosphorylation. The respiratory chain contains 3 multisubunit complexes succinate dehydrogenase (complex II, CII), ubiquinol-cytochrome c oxidoreductase (cytochrome b-c1 complex, complex III, CIII) and cytochrome c oxidase (complex IV, CIV), that cooperate to transfer electrons derived from NADH and succinate to molecular oxygen, creating an electrochemical gradient over the inner membrane that drives transmembrane transport and the ATP synthase. Cytochrome c oxidase is the component of the respiratory chain that catalyzes the reduction of oxygen to water. Electrons originating from reduced cytochrome c in the intermembrane space (IMS) are transferred via the dinuclear copper A center (CU(A)) of subunit 2 and heme A of subunit 1 to the active site in subunit 1, a binuclear center (BNC) formed by heme A3 and copper B (CU(B)). The BNC reduces molecular oxygen to 2 water molecules using 4 electrons from cytochrome c in the IMS and 4 protons from the mitochondrial matrix. The sequence is that of Cytochrome c oxidase subunit 6C (COX6C) from Trachypithecus cristatus (Silvered leaf-monkey).